Reading from the N-terminus, the 1049-residue chain is Dyslexia-associated protein KIAA0319-like protein (1049 aa).

The Cytoplasmic segment spans residues 1–29; it reads MEKRLGVKPNPASWILSGYYWQTSAKWLR. Residues 30–50 traverse the membrane as a helical segment; the sequence is SLYLFYTCFCFSVLWLSTDAS. The MANSC domain occupies 49–127; sequence ASESRCQQGK…AFRTHSSNSM (79 aa). Topologically, residues 51–932 are extracellular; it reads ESRCQQGKTQ…DSNCEWSVLY (882 aa). 5 N-linked (GlcNAc...) asparagine glycosylation sites follow: N247, N395, N472, N487, and N525. 5 PKD domains span residues 312–401, 409–498, 504–594, 600–688, and 694–785; these read SAGE…VKPE, IAIV…VNKA, VANA…VQPE, QADA…VKEE, and IAKI…VKPD. Residues 933–953 form a helical membrane-spanning segment; that stretch reads VIIATFVIVVALGILSWTVIC. The Cytoplasmic segment spans residues 954–1049; sequence CCKRQKGKPK…KARSPREEIL (96 aa). T974 carries the post-translational modification Phosphothreonine. Residues S978, S1009, and S1031 each carry the phosphoserine modification. The segment at 1022–1049 is disordered; the sequence is GKLLHGQNGSVPNGQTPLKARSPREEIL. The segment covering 1028–1037 has biased composition (polar residues); the sequence is QNGSVPNGQT. T1037 is modified (phosphothreonine).

As to quaternary structure, interacts with RTN4R. In terms of assembly, (Microbial infection) Interacts with AAV-2 VP1. In terms of processing, N-glycosylated. In terms of tissue distribution, expressed in cortical neurons in the brain cortex (at protein level).

It is found in the cytoplasmic granule membrane. The protein localises to the golgi apparatus membrane. Its subcellular location is the golgi apparatus. It localises to the trans-Golgi network membrane. The protein resides in the cell membrane. Its function is as follows. Possible role in axon guidance through interaction with RTN4R. (Microbial infection) Acts as a receptor for adeno-associated virus and is involved in adeno-associated virus infection through endocytosis system. This is Dyslexia-associated protein KIAA0319-like protein from Homo sapiens (Human).